The sequence spans 110 residues: Movement protein TGB2 (110 aa).

Residues methionine 1–proline 10 lie on the Cytoplasmic side of the membrane. Residues threonine 11–threonine 34 form a helical membrane-spanning segment. Residues arginine 35–proline 76 lie on the Lumenal side of the membrane. A helical transmembrane segment spans residues phenylalanine 77–leucine 92. The Cytoplasmic segment spans residues serine 93–alanine 110.

This sequence belongs to the Tymovirales TGBp2 protein family.

The protein localises to the host endoplasmic reticulum membrane. Its function is as follows. Plays a role in viral cell-to-cell propagation, by facilitating genome transport to neighboring plant cells through plasmosdesmata,. The protein is Movement protein TGB2 of Plantago asiatica (P1AMV).